A 957-amino-acid chain; its full sequence is Vacuolar membrane protease (957 aa).

The Cytoplasmic portion of the chain corresponds to 1-10; sequence MARYNPFSFT. The chain crosses the membrane as a helical span at residues 11-31; the sequence is PGPVVFFTTVIYVGLFAALLV. At 32–369 the chain is on the vacuolar side; the sequence is THLTVPDYPS…RVFVVFQLHT (338 aa). N-linked (GlcNAc...) asparagine glycans are attached at residues Asn48, Asn105, and Asn136. Zn(2+) contacts are provided by His152 and Asp164. The Proton acceptor role is filled by Glu198. Zn(2+)-binding residues include Glu199, Glu224, and His297. A helical membrane pass occupies residues 370 to 390; it reads LFALCVTLLVVAPIALIGLTF. Residues 391 to 423 are Cytoplasmic-facing; sequence GLSKADKNYLLARKAFVYSSDDDNPVQLYGWRG. The chain crosses the membrane as a helical span at residues 424–444; sequence FFRFPIVFVSATAVVVALAYL. Over 445–450 the chain is Vacuolar; that stretch reads LVRFNA. The helical transmembrane segment at 451–471 threads the bilayer; the sequence is FIIYSSPFAVWSMMLSAWFFV. Residues 472 to 490 are Cytoplasmic-facing; the sequence is AWFFSRGADAMRPSALQRM. A helical membrane pass occupies residues 491–511; it reads YALIWLFIGSFVLLTIITVFV. Residues 512–521 are Vacuolar-facing; that stretch reads NNYQVVAGYP. Residues 522 to 542 form a helical membrane-spanning segment; that stretch reads ALFYFAVVFAALMLSYLELFF. The Cytoplasmic portion of the chain corresponds to 543–642; it reads APTKSAYARH…YPGEQEWSGK (100 aa). 2 disordered regions span residues 560 to 591 and 603 to 628; these read RRNS…DATE and FTRY…RRLD. The segment covering 564 to 577 has biased composition (polar residues); it reads ESASRPLTGSTTAA. Residues 643–663 form a helical membrane-spanning segment; it reads LPSWIWIIQLLLLAPLVIVLV. At 664-685 the chain is on the vacuolar side; sequence GQVALLLTSALYQTPSDGNSPL. Residues 686–706 form a helical membrane-spanning segment; that stretch reads FIYLAIAALSVLLLAPTGPFI. Residues 707 to 713 lie on the Cytoplasmic side of the membrane; it reads HRFTYHV. The chain crosses the membrane as a helical span at residues 714-734; the sequence is PTFLFLVCLATVIYNLVAFPF. At 735–957 the chain is on the vacuolar side; it reads SRDHRLKVYF…LVEGFKQFEI (223 aa). N-linked (GlcNAc...) asparagine glycosylation is found at Asn782, Asn818, and Asn834.

It belongs to the peptidase M28 family. Zn(2+) serves as cofactor.

It is found in the vacuole membrane. Its function is as follows. May be involved in vacuolar sorting and osmoregulation. This chain is Vacuolar membrane protease, found in Pyrenophora tritici-repentis (strain Pt-1C-BFP) (Wheat tan spot fungus).